We begin with the raw amino-acid sequence, 349 residues long: Probable trehalose-phosphate phosphatase H (349 aa).

It belongs to the trehalose phosphatase family. A divalent metal cation is required as a cofactor.

The enzyme catalyses alpha,alpha-trehalose 6-phosphate + H2O = alpha,alpha-trehalose + phosphate. Its pathway is glycan biosynthesis; trehalose biosynthesis. Functionally, removes the phosphate from trehalose 6-phosphate to produce free trehalose. Trehalose accumulation in plant may improve abiotic stress tolerance. In Arabidopsis thaliana (Mouse-ear cress), this protein is Probable trehalose-phosphate phosphatase H (TPPH).